The chain runs to 481 residues: Aspartyl/glutamyl-tRNA(Asn/Gln) amidotransferase subunit B (481 aa).

Positions 29–50 are disordered; sequence SSSKSSHTDPKNTNISPIDLGH.

Belongs to the GatB/GatE family. GatB subfamily. As to quaternary structure, heterotrimer of A, B and C subunits.

The enzyme catalyses L-glutamyl-tRNA(Gln) + L-glutamine + ATP + H2O = L-glutaminyl-tRNA(Gln) + L-glutamate + ADP + phosphate + H(+). It catalyses the reaction L-aspartyl-tRNA(Asn) + L-glutamine + ATP + H2O = L-asparaginyl-tRNA(Asn) + L-glutamate + ADP + phosphate + 2 H(+). In terms of biological role, allows the formation of correctly charged Asn-tRNA(Asn) or Gln-tRNA(Gln) through the transamidation of misacylated Asp-tRNA(Asn) or Glu-tRNA(Gln) in organisms which lack either or both of asparaginyl-tRNA or glutaminyl-tRNA synthetases. The reaction takes place in the presence of glutamine and ATP through an activated phospho-Asp-tRNA(Asn) or phospho-Glu-tRNA(Gln). This is Aspartyl/glutamyl-tRNA(Asn/Gln) amidotransferase subunit B from Malacoplasma penetrans (strain HF-2) (Mycoplasma penetrans).